Here is a 388-residue protein sequence, read N- to C-terminus: Protein RecA (388 aa).

Residue 79-86 (GPESSGKT) participates in ATP binding. Residues 347 to 388 (IDGEEVSEQDTENKKDEPKKEEAVNEEVPLDLGDELEIEIEE) form a disordered region. Basic and acidic residues predominate over residues 357 to 369 (TENKKDEPKKEEA). Acidic residues predominate over residues 370 to 388 (VNEEVPLDLGDELEIEIEE).

This sequence belongs to the RecA family.

The protein localises to the cytoplasm. In terms of biological role, can catalyze the hydrolysis of ATP in the presence of single-stranded DNA, the ATP-dependent uptake of single-stranded DNA by duplex DNA, and the ATP-dependent hybridization of homologous single-stranded DNAs. It interacts with LexA causing its activation and leading to its autocatalytic cleavage. The chain is Protein RecA from Streptococcus pneumoniae (strain Hungary19A-6).